The following is a 449-amino-acid chain: Histidinol dehydrogenase (449 aa).

3 residues coordinate NAD(+): Tyr-136, Gln-204, and Asn-232. Residues Thr-255, Gln-277, and His-280 each contribute to the substrate site. Residues Gln-277 and His-280 each coordinate Zn(2+). Active-site proton acceptor residues include Glu-346 and His-347. Substrate-binding residues include His-347, Asp-380, Glu-434, and His-439. Residue Asp-380 participates in Zn(2+) binding. His-439 is a binding site for Zn(2+).

This sequence belongs to the histidinol dehydrogenase family. Zn(2+) serves as cofactor.

It carries out the reaction L-histidinol + 2 NAD(+) + H2O = L-histidine + 2 NADH + 3 H(+). It functions in the pathway amino-acid biosynthesis; L-histidine biosynthesis; L-histidine from 5-phospho-alpha-D-ribose 1-diphosphate: step 9/9. Catalyzes the sequential NAD-dependent oxidations of L-histidinol to L-histidinaldehyde and then to L-histidine. This Mycobacterium leprae (strain TN) protein is Histidinol dehydrogenase (hisD).